Here is an 800-residue protein sequence, read N- to C-terminus: Leukocyte receptor cluster member 8 homolog (800 aa).

5 disordered regions span residues Asn-118–Ser-149, Pro-175–Phe-229, Ser-245–Gln-273, Thr-335–Ser-394, and Lys-407–Gly-519. 2 stretches are compositionally biased toward low complexity: residues Gln-120–Gly-131 and Asn-184–Ser-201. The segment covering Ser-252–Thr-261 has biased composition (polar residues). Residues Trp-338–Ser-352 show a composition bias toward basic and acidic residues. The segment covering Gln-360–Ala-387 has biased composition (polar residues). Low complexity predominate over residues Ser-409 to Arg-418. Basic residues-rich tracts occupy residues Ser-419–Arg-433 and Glu-508–Gly-519. Residues Asp-636–Ile-800 form the PCI domain.

This chain is Leukocyte receptor cluster member 8 homolog (leng8), found in Xenopus laevis (African clawed frog).